We begin with the raw amino-acid sequence, 1035 residues long: Cell-division control histidine kinase PdhS (1035 aa).

Residues 1–613 (MSGSYPFIDI…HADGSEEPVD (613 aa)) form an important for polar localization region. Residues 500-533 (QGLANTRAESETPVSETSSIEPVEPTPPVKTRSE) form a disordered region. Positions 614-1035 (THLNAIAWRG…VFPPTRVLAD (422 aa)) are interaction with DivK. The region spanning 659-730 (HVEELKTILD…YLHGLSGNGV (72 aa)) is the PAS domain. One can recognise a Histidine kinase domain in the interval 802–1031 (RISHEIRTPL…VVEIVFPPTR (230 aa)). His-805 carries the phosphohistidine; by autocatalysis modification.

As to quaternary structure, interacts with DivK.

Its subcellular location is the cytoplasm. It carries out the reaction ATP + protein L-histidine = ADP + protein N-phospho-L-histidine.. Functionally, functions as a polar differentiation marker. Essential protein that, by localizing in the old pole of dividing cells, controls cell division and maturation, probably through control of DivK phosphorylation status and cellular distribution, which in turn regulates CtrA, a transcriptional regulator of the minB operon. The asymmetrical localization of this protein is probably required for cells to enter a new division cycle. This chain is Cell-division control histidine kinase PdhS (pdhS), found in Brucella suis (strain ATCC 23445 / NCTC 10510).